The primary structure comprises 296 residues: Arginine/serine-rich protein 1 (296 aa).

Positions 1–131 (MSNYVNDMWP…RSRSRSRERS (131 aa)) are disordered. Position 12 is a phosphoserine (Ser-12). Residues 20–31 (SASRSGGSSRLS) are compositionally biased toward low complexity. A compositionally biased stretch (basic residues) spans 32–125 (SRSRSRSFSR…RSRSRSRSRS (94 aa)). Residues Ser-111 and Ser-113 each carry the phosphoserine modification. The residue at position 141 (Arg-141) is an Omega-N-methylarginine. The span at 156-165 (ERSRWRDRSR) shows a compositional bias: basic and acidic residues. Disordered regions lie at residues 156 to 175 (ERSR…TPFR) and 217 to 296 (SHGI…WIPV). Residues 245 to 261 (EKPSQQRSIAFSSNNSV) show a composition bias toward polar residues. Positions 272-287 (ATEETSSRSPKIDKKK) are enriched in basic and acidic residues. The residue at position 280 (Ser-280) is a Phosphoserine.

Belongs to the RSRP family. In terms of processing, phosphorylated. Phosphorylation at Ser-111 and Ser-113 mediates the interaction with spliceosome proteins.

Its subcellular location is the nucleus. Its function is as follows. Probably acts as a spliceosomal factor that contributes to spliceosome assembly and regulates the isoform switching of proteins such as PARP6. The polypeptide is Arginine/serine-rich protein 1 (RSRP1) (Macaca fascicularis (Crab-eating macaque)).